The sequence spans 497 residues: Latent membrane protein 2 (497 aa).

The segment at 1–108 is disordered; that stretch reads MGSLEMVPMG…PPYSPRDDSS (108 aa). Residues 1–123 are Cytoplasmic-facing; it reads MGSLEMVPMG…EAGRGSMNPV (123 aa). The segment covering 27–41 has biased composition (polar residues); it reads NNSQYPSASGSSGNT. The short motif at 97–101 is the PPxY motif element; sequence PPPPY. Phosphotyrosine; by host is present on Tyr-112. The helical transmembrane segment at 124–144 threads the bilayer; the sequence is CLPVIVAPYLFWLAAIAASCF. The Extracellular portion of the chain corresponds to 145–147; sequence TAS. Residues 148-168 form a helical membrane-spanning segment; sequence VSTVVTATGLALSLLLLAAVA. Residues 169 to 177 lie on the Cytoplasmic side of the membrane; it reads SSYAAAQRK. The helical transmembrane segment at 178–198 threads the bilayer; it reads LLTPVTVLTAVVTFFAICLTW. At 199–211 the chain is on the extracellular side; sequence RIEDPPFNSLLFA. The chain crosses the membrane as a helical span at residues 212-232; that stretch reads LLAAAGGLQGIYVLVMLVLLI. The Cytoplasmic portion of the chain corresponds to 233 to 241; sequence LAYRRRWRR. Residues 242–262 traverse the membrane as a helical segment; that stretch reads LTVCGGIMFLACVLVLIVDAV. At 263-267 the chain is on the extracellular side; the sequence is LQLSP. A helical transmembrane segment spans residues 268–288; it reads LLGAVTVVSMTLLLLAFVLWL. The Cytoplasmic portion of the chain corresponds to 289 to 296; the sequence is SSPGGLGT. A helical membrane pass occupies residues 297 to 317; it reads LGAALLTLAAALALLASLILG. Thr-318 is a topological domain (extracellular). A helical membrane pass occupies residues 319-339; the sequence is LNLTTMFLLMLLWTLVVLLIC. Topologically, residues 340–354 are cytoplasmic; the sequence is SSCSSCPLSKILLAR. Residues 355-375 traverse the membrane as a helical segment; that stretch reads LFLYALALLLLASALIAGGSI. Topologically, residues 376 to 388 are extracellular; that stretch reads LQTNFKSLSSTEF. A helical membrane pass occupies residues 389–409; the sequence is IPNLFCMLLLIVAGILFILAI. Residues 410 to 422 are Cytoplasmic-facing; sequence LTEWGSGNRTYGP. Residues 423-443 traverse the membrane as a helical segment; the sequence is VFMCLGGLLTMVAGAVWLTVM. The Extracellular portion of the chain corresponds to 444 to 449; that stretch reads SNTLLS. The helical transmembrane segment at 450–470 threads the bilayer; that stretch reads AWILTAGFLIFLIGFALFGVI. The Cytoplasmic segment spans residues 471–497; the sequence is RCCRYCCYYCLTLESEERPPTPYRNTV.

It belongs to the herpesviridae LMP-2 family. In terms of assembly, the cytoplasmic N-terminal domain interacts with human SRC family protein tyrosine kinases SYK and LYN. Binds human ITCH, WWP2 and NEDD4L. Post-translationally, phosphorylated on cytoplasmic N-terminal tyrosine residues, possibly by human LYN. Can be ubiquitinated by human ITCH and WWP2 on the N-terminus in a lysine-independent manner.

Its subcellular location is the host cell membrane. The protein localises to the host endomembrane system. It localises to the host cytoplasm. It is found in the host perinuclear region. Maintains EBV latent infection of B-lymphocyte, by preventing lytic reactivation of the virus in response to surface immunoglobulin (sIg) cross-linking. Acts like a dominant negative inhibitor of the sIg-associated protein tyrosine kinases, LYN and SYK. Also blocks translocation of the B-cell antigen receptor (BCR) into lipid rafts, preventing the subsequent signaling and accelerated internalization of the BCR upon BCR cross-linking. Serves as a molecular scaffold to recruit SYK, LYN and E3 protein-ubiquitin ligases, such as ITCH and NEDD4L, leading to ubiquitination and potential degradation of both tyrosines kinases. Possesses a constitutive signaling activity in non-transformed cells, inducing bypass of normal B lymphocyte developmental checkpoints allowing immunoglobulin-negative cells to colonize peripheral lymphoid organs. Its function is as follows. May be a negative regulator of isoform LMP2A. The polypeptide is Latent membrane protein 2 (LMP2) (Epstein-Barr virus (strain B95-8) (HHV-4)).